A 393-amino-acid polypeptide reads, in one-letter code: MERSISFNPRGDNELPDDRSSDVGYAANDRRLAYSRSFQQSHGPRTPAVTEAAKPFLDRTVSSIDMPPDIYSVDGSDVFFGEGKDVDMAKVSVLEMVWEVFGVVTSGNRQMKRLFLLIALNVLYSTTELSIGIFTGRVGLVSDAFHLTFGCGLLTFSLFAMATSRKKPDHAYSYGYKRLEVLSAFTNALFLMFMSFSLAVEALHAFIQDESEHKHYLIVSAVTNLLVNLLGVWFFRNYARVNIAYRKAEDMNYHSVCLHVISDSIRSAGLILASWLLSLGVENAEVLCLGLVSVTVFMLVMPLFKATGGVLLQMAPPNIPSSALSKCLRQITSREDVTEVLQARFWEVVPGHTVGSLRLQVKSGIDERPLLQYVYDVYHDLGVQDLTLQTDYT.

The segment at 1-23 (MERSISFNPRGDNELPDDRSSDV) is disordered. At 1–113 (MERSISFNPR…VTSGNRQMKR (113 aa)) the chain is on the cytoplasmic side. Over residues 11–21 (GDNELPDDRSS) the composition is skewed to basic and acidic residues. The chain crosses the membrane as a helical span at residues 114–134 (LFLLIALNVLYSTTELSIGIF). Residues 135-139 (TGRVG) lie on the Vacuolar side of the membrane. A helical transmembrane segment spans residues 140-160 (LVSDAFHLTFGCGLLTFSLFA). The Cytoplasmic portion of the chain corresponds to 161 to 186 (MATSRKKPDHAYSYGYKRLEVLSAFT). The helical transmembrane segment at 187–207 (NALFLMFMSFSLAVEALHAFI) threads the bilayer. Over 208 to 214 (QDESEHK) the chain is Vacuolar. The helical transmembrane segment at 215–235 (HYLIVSAVTNLLVNLLGVWFF) threads the bilayer. Residues 236-259 (RNYARVNIAYRKAEDMNYHSVCLH) lie on the Cytoplasmic side of the membrane. The helical transmembrane segment at 260–280 (VISDSIRSAGLILASWLLSLG) threads the bilayer. The Vacuolar segment spans residues 281–283 (VEN). Residues 284–304 (AEVLCLGLVSVTVFMLVMPLF) form a helical membrane-spanning segment. Over 305 to 393 (KATGGVLLQM…QDLTLQTDYT (89 aa)) the chain is Cytoplasmic.

This sequence belongs to the cation diffusion facilitator (CDF) transporter (TC 2.A.4) family.

It is found in the vacuole membrane. Functionally, involved in sequestration of excess metal in the cytoplasm into vacuoles to maintain metal homeostasis. In Arabidopsis thaliana (Mouse-ear cress), this protein is Metal tolerance protein C2 (MTPC2).